The chain runs to 145 residues: Transcription antitermination protein NusB (145 aa).

This sequence belongs to the NusB family.

Its function is as follows. Involved in transcription antitermination. Required for transcription of ribosomal RNA (rRNA) genes. Binds specifically to the boxA antiterminator sequence of the ribosomal RNA (rrn) operons. This is Transcription antitermination protein NusB from Paraburkholderia phymatum (strain DSM 17167 / CIP 108236 / LMG 21445 / STM815) (Burkholderia phymatum).